The sequence spans 343 residues: Signal peptide peptidase 1 (343 aa).

The Lumenal segment spans residues 1–19 (MKTHERAANLALAGLSLAP). The chain crosses the membrane as a helical span at residues 20–40 (LVVKVEPNVNVILTACLAVYV). The Cytoplasmic segment spans residues 41–62 (GCYRSVKPTPPSETMSKEHAMR). Residues 63–83 (FPLVGSAMLLSLFLLFKFLSK) form a helical membrane-spanning segment. Over 84–87 (DLVN) the chain is Lumenal. Residues 88 to 108 (AVLTAYFFILGIAALCATLLP) form a helical membrane-spanning segment. Residues 109 to 136 (SIKRFLPKEWNDNAIVWCAPFFHSLSVE) are Cytoplasmic-facing. The chain crosses the membrane as a helical span at residues 137–157 (FTKSQVVASIPGFFFCIWYAA). Residues 158 to 160 (KKH) lie on the Lumenal side of the membrane. A helical membrane pass occupies residues 161 to 181 (WLANNVLGISFCIQGIEMLSL). Over 182-188 (GSFKTGA) the chain is Cytoplasmic. The chain crosses the membrane as a helical span at residues 189–209 (ILLAGLFFYDIFWVFFTPVMV). Residue D198 is part of the active site. Residues 210–230 (SVAKSFDAPIKLLFPTGDAAR) are Lumenal-facing. Residues 231-251 (PFSMLGLGDIVIPGIFVALAL) traverse the membrane as a helical segment. Residue D239 is part of the active site. At 252 to 266 (RFDVSRGIKNRYFNS) the chain is on the cytoplasmic side. Residues 267–287 (AFLGYTVGLTVTIIVMNWFQA) form a helical membrane-spanning segment. Residues 288–290 (AQP) lie on the Lumenal side of the membrane. The PAL signature appears at 290–292 (PAL). Residues 291–311 (ALLYIVPGVIGFVAVHCLWNG) traverse the membrane as a helical segment. Residues 312–343 (EVKPLLEYNESKAEEEDAVEEDTDSKQNKKEE) are Cytoplasmic-facing. The segment at 322–343 (SKAEEEDAVEEDTDSKQNKKEE) is disordered. Residues 324–334 (AEEEDAVEEDT) are compositionally biased toward acidic residues. The Endoplasmic reticulum targeting signal signature appears at 340-343 (KKEE).

Belongs to the peptidase A22B family. As to expression, ubiquitous.

It is found in the endoplasmic reticulum membrane. Intramembrane-cleaving aspartic protease (I-CLiP) that cleaves type II membrane signal peptides in the hydrophobic plane of the membrane. Catalyzes intramembrane proteolysis of some signal peptides after they have been cleaved from a preprotein, resulting in the release of the fragment from the ER membrane into the cytoplasm. This is Signal peptide peptidase 1 (SPP1) from Oryza sativa subsp. japonica (Rice).